Here is a 333-residue protein sequence, read N- to C-terminus: N-acetyl-gamma-glutamyl-phosphate reductase (333 aa).

The active site involves Cys145.

It belongs to the NAGSA dehydrogenase family. Type 1 subfamily.

The protein localises to the cytoplasm. The catalysed reaction is N-acetyl-L-glutamate 5-semialdehyde + phosphate + NADP(+) = N-acetyl-L-glutamyl 5-phosphate + NADPH + H(+). The protein operates within amino-acid biosynthesis; L-arginine biosynthesis; N(2)-acetyl-L-ornithine from L-glutamate: step 3/4. Catalyzes the NADPH-dependent reduction of N-acetyl-5-glutamyl phosphate to yield N-acetyl-L-glutamate 5-semialdehyde. This is N-acetyl-gamma-glutamyl-phosphate reductase from Salinispora arenicola (strain CNS-205).